The chain runs to 388 residues: GTPase Obg (388 aa).

Residues methionine 1 to leucine 159 form the Obg domain. An OBG-type G domain is found at alanine 160–arginine 333. GTP is bound by residues glycine 166–serine 173, phenylalanine 191–valine 195, aspartate 213–glycine 216, asparagine 283–aspartate 286, and serine 314–tyrosine 316. Mg(2+) is bound by residues serine 173 and threonine 193.

Belongs to the TRAFAC class OBG-HflX-like GTPase superfamily. OBG GTPase family. In terms of assembly, monomer. Requires Mg(2+) as cofactor.

The protein localises to the cytoplasm. Its function is as follows. An essential GTPase which binds GTP, GDP and possibly (p)ppGpp with moderate affinity, with high nucleotide exchange rates and a fairly low GTP hydrolysis rate. Plays a role in control of the cell cycle, stress response, ribosome biogenesis and in those bacteria that undergo differentiation, in morphogenesis control. In Shewanella frigidimarina (strain NCIMB 400), this protein is GTPase Obg.